The following is a 308-amino-acid chain: MKRVWPRIPTISNVCRARSIYSAAQENAYRSSVKLIQEYSEKVHKKLQAKLLENPSETSPEIERLQVLSQINLPEVRSKFHKKEIDYTNPVFLYMLKQQWEDYQKLLLLQRLEQMKVIKDSGIGSFSPSVDVQLGFNPENNDSITPGTILPSTVTVKTPWLSVLPFNCKKNHYSVITLDLDVPNYETNRFETHCNWLLTNIPIEASKRVPIDTSKAFFQYRPPIVHRGEDKHRILTLVLRQKSSSISIPSNALVRERFDLSEFCSIYDLEPVGAHLWRSGWDSDAVALLSKHPSVHEYRDIRVERIPA.

A mitochondrion-targeting transit peptide spans 1–17 (MKRVWPRIPTISNVCRA).

It belongs to the phosphatidylethanolamine-binding protein family. Mitochondrion-specific ribosomal protein mL38 subfamily. In terms of assembly, component of the mitochondrial large ribosomal subunit (mt-LSU). Mature yeast 74S mitochondrial ribosomes consist of a small (37S) and a large (54S) subunit. The 37S small subunit contains a 15S ribosomal RNA (15S mt-rRNA) and at least 32 different proteins. The 54S large subunit contains a 21S rRNA (21S mt-rRNA) and at least 45 different proteins.

It localises to the mitochondrion. Component of the mitochondrial ribosome (mitoribosome), a dedicated translation machinery responsible for the synthesis of mitochondrial genome-encoded proteins, including at least some of the essential transmembrane subunits of the mitochondrial respiratory chain. The mitoribosomes are attached to the mitochondrial inner membrane and translation products are cotranslationally integrated into the membrane. This is Large ribosomal subunit protein mL38 (mrpl35) from Schizosaccharomyces pombe (strain 972 / ATCC 24843) (Fission yeast).